Consider the following 240-residue polypeptide: Pyridoxine 5'-phosphate synthase (240 aa).

A 3-amino-2-oxopropyl phosphate-binding site is contributed by N7. A 1-deoxy-D-xylulose 5-phosphate-binding site is contributed by 9 to 10 (DH). A 3-amino-2-oxopropyl phosphate-binding site is contributed by R18. The active-site Proton acceptor is H43. 1-deoxy-D-xylulose 5-phosphate-binding residues include R45 and H50. Residue E70 is the Proton acceptor of the active site. T100 lines the 1-deoxy-D-xylulose 5-phosphate pocket. The active-site Proton donor is H191. 3-amino-2-oxopropyl phosphate is bound by residues G192 and 213 to 214 (GH).

Belongs to the PNP synthase family. As to quaternary structure, homooctamer; tetramer of dimers.

Its subcellular location is the cytoplasm. It carries out the reaction 3-amino-2-oxopropyl phosphate + 1-deoxy-D-xylulose 5-phosphate = pyridoxine 5'-phosphate + phosphate + 2 H2O + H(+). The protein operates within cofactor biosynthesis; pyridoxine 5'-phosphate biosynthesis; pyridoxine 5'-phosphate from D-erythrose 4-phosphate: step 5/5. Functionally, catalyzes the complicated ring closure reaction between the two acyclic compounds 1-deoxy-D-xylulose-5-phosphate (DXP) and 3-amino-2-oxopropyl phosphate (1-amino-acetone-3-phosphate or AAP) to form pyridoxine 5'-phosphate (PNP) and inorganic phosphate. In Crocosphaera subtropica (strain ATCC 51142 / BH68) (Cyanothece sp. (strain ATCC 51142)), this protein is Pyridoxine 5'-phosphate synthase.